Consider the following 428-residue polypeptide: Dihydroorotase (428 aa).

Positions 59 and 61 each coordinate Zn(2+). Residues 61–63 (HLR) and Asn-93 contribute to the substrate site. Zn(2+) contacts are provided by Asp-151, His-178, and His-231. Substrate is bound at residue Asn-277. Asp-304 contributes to the Zn(2+) binding site. Asp-304 is an active-site residue. Residues His-308 and 322–323 (FG) contribute to the substrate site.

The protein belongs to the metallo-dependent hydrolases superfamily. DHOase family. Class I DHOase subfamily. The cofactor is Zn(2+).

The catalysed reaction is (S)-dihydroorotate + H2O = N-carbamoyl-L-aspartate + H(+). Its pathway is pyrimidine metabolism; UMP biosynthesis via de novo pathway; (S)-dihydroorotate from bicarbonate: step 3/3. Functionally, catalyzes the reversible cyclization of carbamoyl aspartate to dihydroorotate. In Bacillus anthracis (strain A0248), this protein is Dihydroorotase.